Reading from the N-terminus, the 407-residue chain is uncharacterized protein (407 aa).

The EAL domain occupies 1 to 250; that stretch reads MLDPLDILTN…LERDVLKQRL (250 aa).

This is an uncharacterized protein from Bacillus subtilis (strain 168).